The following is a 98-amino-acid chain: Large ribosomal subunit protein uL23 (98 aa).

Belongs to the universal ribosomal protein uL23 family. As to quaternary structure, part of the 50S ribosomal subunit. Contacts protein L29, and trigger factor when it is bound to the ribosome.

Its function is as follows. One of the early assembly proteins it binds 23S rRNA. One of the proteins that surrounds the polypeptide exit tunnel on the outside of the ribosome. Forms the main docking site for trigger factor binding to the ribosome. In Streptococcus pyogenes serotype M1, this protein is Large ribosomal subunit protein uL23.